Here is a 306-residue protein sequence, read N- to C-terminus: Small ribosomal subunit protein uS2 (306 aa).

Ser2 is modified (N-acetylserine). Laminin-binding regions lie at residues 161 to 180 (IPCN…MLAR) and 205 to 229 (RDPE…EYQG). 5 [DE]-W-[ST] repeats span residues 230-232 (EWT), 245-247 (DWS), 276-278 (DWS), 286-288 (DWS), and 304-306 (EWS). The tract at residues 242 to 306 (EVADWSEGVQ…EWTGTTTEWS (65 aa)) is laminin-binding. The interval 261–306 (PAERPEIPAAKPAAEDWSSQPASTDDWSAAPTAQASEWTGTTTEWS) is disordered. Residues 277–306 (WSSQPASTDDWSAAPTAQASEWTGTTTEWS) are compositionally biased toward polar residues.

It belongs to the universal ribosomal protein uS2 family. As to quaternary structure, monomer (37LRP) and homodimer (67LR). Component of the small ribosomal subunit. Mature ribosomes consist of a small (40S) and a large (60S) subunit. The 40S subunit contains about 33 different proteins and 1 molecule of RNA (18S). The 60S subunit contains about 49 different proteins and 3 molecules of RNA (28S, 5.8S and 5S). Interacts with rps21. Interacts with several laminins including at least lamb1. Interacts with mdk. Acylated. Acylation may be a prerequisite for conversion of the monomeric 37 kDa laminin receptor precursor (37LRP) to the mature dimeric 67 kDa laminin receptor (67LR), and may provide a mechanism for membrane association. Post-translationally, cleaved by stromelysin-3 (ST3) at the cell surface. Cleavage by stromelysin-3 may be a mechanism to alter cell-extracellular matrix interactions.

The protein localises to the cell membrane. It is found in the cytoplasm. Its subcellular location is the nucleus. Its function is as follows. Required for the assembly and/or stability of the 40S ribosomal subunit. Required for the processing of the 20S rRNA-precursor to mature 18S rRNA in a late step of the maturation of 40S ribosomal subunits. Also functions as a cell surface receptor for laminin. Plays a role in cell adhesion to the basement membrane and in the consequent activation of signaling transduction pathways. May play a role in cell fate determination and tissue morphogenesis. This Xenopus tropicalis (Western clawed frog) protein is Small ribosomal subunit protein uS2 (rpsa).